A 616-amino-acid chain; its full sequence is Chaperone protein HscA (616 aa).

This sequence belongs to the heat shock protein 70 family.

In terms of biological role, chaperone involved in the maturation of iron-sulfur cluster-containing proteins. Has a low intrinsic ATPase activity which is markedly stimulated by HscB. Involved in the maturation of IscU. This chain is Chaperone protein HscA, found in Pectobacterium atrosepticum (strain SCRI 1043 / ATCC BAA-672) (Erwinia carotovora subsp. atroseptica).